The chain runs to 58 residues: PI-actitoxin-Axm2b (58 aa).

Positions 5–55 (CLLPSDGGVCRGRFTNYYYNSRTRRCETFRYGGCGGNANNFHTLRQCQATC) constitute a BPTI/Kunitz inhibitor domain. Cystine bridges form between Cys5–Cys55, Cys14–Cys38, and Cys30–Cys51.

This sequence belongs to the venom Kunitz-type family. Sea anemone type 2 potassium channel toxin subfamily.

The protein localises to the secreted. The protein resides in the nematocyst. In terms of biological role, serine protease inhibitor. Shows activity on trypsin and also shows a weak inhibition against alpha-chymotrypsin. The protein is PI-actitoxin-Axm2b of Anthopleura aff. xanthogrammica (Sea anemone).